The chain runs to 572 residues: Proline--tRNA ligase (572 aa).

The protein belongs to the class-II aminoacyl-tRNA synthetase family. ProS type 1 subfamily. As to quaternary structure, homodimer.

It localises to the cytoplasm. It catalyses the reaction tRNA(Pro) + L-proline + ATP = L-prolyl-tRNA(Pro) + AMP + diphosphate. Functionally, catalyzes the attachment of proline to tRNA(Pro) in a two-step reaction: proline is first activated by ATP to form Pro-AMP and then transferred to the acceptor end of tRNA(Pro). As ProRS can inadvertently accommodate and process non-cognate amino acids such as alanine and cysteine, to avoid such errors it has two additional distinct editing activities against alanine. One activity is designated as 'pretransfer' editing and involves the tRNA(Pro)-independent hydrolysis of activated Ala-AMP. The other activity is designated 'posttransfer' editing and involves deacylation of mischarged Ala-tRNA(Pro). The misacylated Cys-tRNA(Pro) is not edited by ProRS. This Yersinia enterocolitica serotype O:8 / biotype 1B (strain NCTC 13174 / 8081) protein is Proline--tRNA ligase.